Consider the following 1403-residue polypeptide: DNA-directed RNA polymerase subunit beta' (1403 aa).

Residues cysteine 70, cysteine 72, cysteine 85, and cysteine 88 each contribute to the Zn(2+) site. 3 residues coordinate Mg(2+): aspartate 461, aspartate 463, and aspartate 465. The interval 687-708 (QQISQEETTGDRDGKRETRKQP) is disordered. Residues 695–706 (TGDRDGKRETRK) are compositionally biased toward basic and acidic residues. Zn(2+) is bound by residues cysteine 805, cysteine 879, cysteine 886, and cysteine 889. Positions 1381 to 1403 (THGDTGPLGEPSRPVGTQTTGAA) are disordered.

The protein belongs to the RNA polymerase beta' chain family. The RNAP catalytic core consists of 2 alpha, 1 beta, 1 beta' and 1 omega subunit. When a sigma factor is associated with the core the holoenzyme is formed, which can initiate transcription. Requires Mg(2+) as cofactor. Zn(2+) serves as cofactor.

The catalysed reaction is RNA(n) + a ribonucleoside 5'-triphosphate = RNA(n+1) + diphosphate. Its function is as follows. DNA-dependent RNA polymerase catalyzes the transcription of DNA into RNA using the four ribonucleoside triphosphates as substrates. This chain is DNA-directed RNA polymerase subunit beta', found in Myxococcus xanthus (strain DK1622).